A 156-amino-acid chain; its full sequence is Small ribosomal subunit protein uS7 (156 aa).

The protein belongs to the universal ribosomal protein uS7 family. As to quaternary structure, part of the 30S ribosomal subunit. Contacts proteins S9 and S11.

One of the primary rRNA binding proteins, it binds directly to 16S rRNA where it nucleates assembly of the head domain of the 30S subunit. Is located at the subunit interface close to the decoding center, probably blocks exit of the E-site tRNA. This is Small ribosomal subunit protein uS7 from Leptothrix cholodnii (strain ATCC 51168 / LMG 8142 / SP-6) (Leptothrix discophora (strain SP-6)).